We begin with the raw amino-acid sequence, 252 residues long: 5'-nucleotidase SurE (252 aa).

A divalent metal cation-binding residues include aspartate 8, aspartate 9, serine 39, and asparagine 91.

Belongs to the SurE nucleotidase family. A divalent metal cation serves as cofactor.

Its subcellular location is the cytoplasm. It carries out the reaction a ribonucleoside 5'-phosphate + H2O = a ribonucleoside + phosphate. In terms of biological role, nucleotidase that shows phosphatase activity on nucleoside 5'-monophosphates. The protein is 5'-nucleotidase SurE of Variovorax paradoxus (strain S110).